A 648-amino-acid chain; its full sequence is Siderophore transporter MYCGRDRAFT_70577 (648 aa).

2 stretches are compositionally biased toward basic and acidic residues: residues 1 to 11 (MRTSSESHSRS) and 29 to 46 (SASKDHHDHDHHHKDTSI). Residues 1–58 (MRTSSESHSRSDAFNGKNDASQVTVDSDSASKDHHDHDHHHKDTSINERQSQHVHQQA) form a disordered region. Polar residues predominate over residues 47 to 58 (NERQSQHVHQQA). 11 helical membrane passes run 79–99 (LLLYVLVASLALTMFAYALDQ), 151–171 (VVVLVVYAVGFAVAASSQGLA), 205–225 (AFWSGMLATPFLITTFINGFI), 236–256 (WGLGMFAIMMPVLLTPAIWTL), 303–323 (LIGLLLLGLAFSLILLALNLA), 336–356 (IAMLVIGFVILGLFIAYEALL), 409–429 (TIFIGTTTLTLCTMSPIGGLI), 438–458 (TLMVIGAIIKLIGYGVGLDGN), 468–488 (LAVSQVMLGMGAWTVIGARVG), 500–520 (VVISVMSLWSTMASSIGSTIA), and 578–598 (GIILAVSLVLAAVPVVFSCLM).

This sequence belongs to the major facilitator superfamily.

Its subcellular location is the cell membrane. Siderophore transporter; part of the gene cluster 14 that mediates the biosynthesis of a ferrichrome A-like siderophors which may contribute to organismal virulence. The chain is Siderophore transporter MYCGRDRAFT_70577 from Zymoseptoria tritici (strain CBS 115943 / IPO323) (Speckled leaf blotch fungus).